Consider the following 823-residue polypeptide: Molybdenum cofactor sulfurase (823 aa).

The residue at position 228 (K228) is an N6-(pyridoxal phosphate)lysine. C392 is a catalytic residue. Positions 628–667 are disordered; the sequence is SSTRLAEPRRGLGSRKSPLRPAMPGAFPQDTPTPEAERNP. Positions 644 to 819 constitute an MOSC domain; that stretch reads SPLRPAMPGA…VMVGDVVTPS (176 aa).

This sequence belongs to the class-V pyridoxal-phosphate-dependent aminotransferase family. MOCOS subfamily. The cofactor is pyridoxal 5'-phosphate.

The enzyme catalyses Mo-molybdopterin + L-cysteine + AH2 = thio-Mo-molybdopterin + L-alanine + A + H2O. It participates in cofactor biosynthesis; molybdopterin biosynthesis. In terms of biological role, sulfurates the molybdenum cofactor. Sulfation of molybdenum is essential for xanthine dehydrogenase (XDH) and aldehyde oxidase (ADO) enzymes in which molybdenum cofactor is liganded by 1 oxygen and 1 sulfur atom in active form. This Aspergillus niger (strain ATCC MYA-4892 / CBS 513.88 / FGSC A1513) protein is Molybdenum cofactor sulfurase.